The sequence spans 274 residues: NADPH-dependent 7-cyano-7-deazaguanine reductase (274 aa).

Residue 80 to 82 (VES) participates in substrate binding. 82–83 (SK) contacts NADPH. Cys181 acts as the Thioimide intermediate in catalysis. Asp188 functions as the Proton donor in the catalytic mechanism. 220–221 (HE) lines the substrate pocket. Residue 249-250 (RG) coordinates NADPH.

Belongs to the GTP cyclohydrolase I family. QueF type 2 subfamily. As to quaternary structure, homodimer.

It localises to the cytoplasm. It catalyses the reaction 7-aminomethyl-7-carbaguanine + 2 NADP(+) = 7-cyano-7-deazaguanine + 2 NADPH + 3 H(+). It participates in tRNA modification; tRNA-queuosine biosynthesis. In terms of biological role, catalyzes the NADPH-dependent reduction of 7-cyano-7-deazaguanine (preQ0) to 7-aminomethyl-7-deazaguanine (preQ1). The protein is NADPH-dependent 7-cyano-7-deazaguanine reductase of Burkholderia ambifaria (strain MC40-6).